We begin with the raw amino-acid sequence, 356 residues long: Ferrochelatase (356 aa).

2 residues coordinate Fe cation: histidine 214 and glutamate 295.

This sequence belongs to the ferrochelatase family.

It localises to the cytoplasm. It carries out the reaction heme b + 2 H(+) = protoporphyrin IX + Fe(2+). Its pathway is porphyrin-containing compound metabolism; protoheme biosynthesis; protoheme from protoporphyrin-IX: step 1/1. Functionally, catalyzes the ferrous insertion into protoporphyrin IX. The protein is Ferrochelatase of Paraburkholderia xenovorans (strain LB400).